We begin with the raw amino-acid sequence, 250 residues long: MSEDQPHANGAYYRRVLLKLSGEGLLGNKEFGLDLEMVDRVAGEVKAAHDRGIQVCLVIGGGNIFRGISTAAKGMDRTSADYMGMLATVMNALAVQNALEKRGVQTRVQSAIPMSMVCEPYIRRRAIRHMEKGRVVIFAAGTGNPFFTTDTAAALRAVEMNCDAILKATQVDGVYSADPNKVPDAVRFESLTFTDVLTRDLRVMDTSAIALARDNNIPIVVFSLHTPGALADVLDRRGRFTEILCDSHQE.

Residue K19–G22 participates in ATP binding. G61 provides a ligand contact to UMP. ATP contacts are provided by G62 and R66. Residues D81 and T142–T149 each bind UMP. T169, Q170, Y175, and D178 together coordinate ATP.

The protein belongs to the UMP kinase family. In terms of assembly, homohexamer.

The protein localises to the cytoplasm. It catalyses the reaction UMP + ATP = UDP + ADP. It functions in the pathway pyrimidine metabolism; CTP biosynthesis via de novo pathway; UDP from UMP (UMPK route): step 1/1. Inhibited by UTP. Catalyzes the reversible phosphorylation of UMP to UDP. The sequence is that of Uridylate kinase from Rhodospirillum rubrum (strain ATCC 11170 / ATH 1.1.1 / DSM 467 / LMG 4362 / NCIMB 8255 / S1).